Consider the following 342-residue polypeptide: Phosphate acyltransferase (342 aa).

The protein belongs to the PlsX family. As to quaternary structure, homodimer. Probably interacts with PlsY.

The protein resides in the cytoplasm. It carries out the reaction a fatty acyl-[ACP] + phosphate = an acyl phosphate + holo-[ACP]. Its pathway is lipid metabolism; phospholipid metabolism. Its function is as follows. Catalyzes the reversible formation of acyl-phosphate (acyl-PO(4)) from acyl-[acyl-carrier-protein] (acyl-ACP). This enzyme utilizes acyl-ACP as fatty acyl donor, but not acyl-CoA. This is Phosphate acyltransferase from Pelotomaculum thermopropionicum (strain DSM 13744 / JCM 10971 / SI).